The following is a 399-amino-acid chain: Developmentally-regulated G-protein 1 (399 aa).

In terms of domain architecture, OBG-type G spans 63–288 (GRVALIGFPS…LLARMWDEMG (226 aa)). GTP-binding positions include 69–76 (GFPSVGKS), 115–119 (DLPGI), and 246–249 (NKID). A TGS domain is found at 288-366 (GLVRVYSKPQ…EDEDVVQIVK (79 aa)). The disordered stretch occupies residues 367–399 (KKERDEGGRGRFKSHSNAPARIADREKKAPLKQ). Basic and acidic residues predominate over residues 388-399 (IADREKKAPLKQ).

The protein belongs to the TRAFAC class OBG-HflX-like GTPase superfamily. OBG GTPase family. In terms of tissue distribution, expressed in actively growing tissues and reproductive organs. Mostly expressed in leaves, stems and siliques. Also present in flowers and flower buds, and, to a lower extent, in roots.

Its subcellular location is the cytoplasmic vesicle. The protein resides in the cytoplasm. Functionally, binds GDP and GTP, and has low GTPase activity. May interact with phosphatidic acid (PA). This is Developmentally-regulated G-protein 1 (DRG1) from Arabidopsis thaliana (Mouse-ear cress).